A 404-amino-acid chain; its full sequence is Zinc finger CCCH domain-containing protein 15 homolog (404 aa).

The segment covering 1–10 (MPPKKAPPGP) has biased composition (pro residues). A disordered region spans residues 1–71 (MPPKKAPPGP…KRKEEKEKKL (71 aa)). Basic and acidic residues predominate over residues 12-28 (KKTEQKKKEKVIEDKTF). Over residues 38-50 (QQKFIQQVQKQVQ) the composition is skewed to low complexity. The span at 56-71 (PRQDGDKRKEEKEKKL) shows a compositional bias: basic and acidic residues. 2 C3H1-type zinc fingers span residues 94–121 (DPKSVVCAFFKQGTCTKGDKCKFSHDLS) and 165–202 (PTTDIICKFFLEAVEKSKYGWFWECPNGGKCIYRHALP). T218 is modified (phosphothreonine). At S221 the chain carries Phosphoserine. Residues 246 to 270 (LAWKKRKIAEKKAKLAAEEERKKSD) adopt a coiled-coil conformation. 2 stretches are compositionally biased toward low complexity: residues 352–361 (EAAKTAAAED) and 369–380 (PSSSAPANDAAP). The interval 352-380 (EAAKTAAAEDAAADEDGPSSSAPANDAAP) is disordered.

This sequence belongs to the ZC3H15/TMA46 family.

The sequence is that of Zinc finger CCCH domain-containing protein 15 homolog from Drosophila melanogaster (Fruit fly).